Consider the following 154-residue polypeptide: MGLSDGEWQLVLNAWGKVEADVAGHGQEVLIRLFTGHPETLEKFDKFKHLKTEAEMKASEDLKKHGNTVLTALGGILKKKGHHEAEVKHLAESHANKHKIPVKYLEFISDAIIHVLHAKHPSDFGADAQAAMSKALELFRNDMAAQYKVLGFHG.

In terms of domain architecture, Globin spans 2–148; the sequence is GLSDGEWQLV…FRNDMAAQYK (147 aa). Serine 4 is modified (phosphoserine). Residue histidine 65 coordinates nitrite. Position 65 (histidine 65) interacts with O2. Phosphothreonine is present on threonine 68. Histidine 94 contacts heme b.

The protein belongs to the globin family. Monomeric.

It is found in the cytoplasm. Its subcellular location is the sarcoplasm. The enzyme catalyses Fe(III)-heme b-[protein] + nitric oxide + H2O = Fe(II)-heme b-[protein] + nitrite + 2 H(+). The catalysed reaction is H2O2 + AH2 = A + 2 H2O. Functionally, monomeric heme protein which primary function is to store oxygen and facilitate its diffusion within muscle tissues. Reversibly binds oxygen through a pentacoordinated heme iron and enables its timely and efficient release as needed during periods of heightened demand. Depending on the oxidative conditions of tissues and cells, and in addition to its ability to bind oxygen, it also has a nitrite reductase activity whereby it regulates the production of bioactive nitric oxide. Under stress conditions, like hypoxia and anoxia, it also protects cells against reactive oxygen species thanks to its pseudoperoxidase activity. This chain is Myoglobin (MB), found in Bos mutus grunniens (Wild yak).